We begin with the raw amino-acid sequence, 264 residues long: MKAYLELMQHVLDHGTDKADRTGTGTRSVFGYQMRFDLAQGFPLLTTKKLHLRSIVHELLWFLAGDTNIRYLKDNGVRIWDEWADENGDLGPVYGYQWRSWPAPDGRHIDQISGLLDMIRRNPDSRRLIVSAWNPALVDDMALPPCHCLFQFYVADGKLSCQLYQRSADVFLGVPFNIASYALLTLMVAQVTGLQPGEFVHTFGDAHLYSNHFEQARLQLQREPRALPVMKLNPVVTDLFAFRFEDFTLEGYDPHPHIKAEVSV.

R21 contributes to the dUMP binding site. (6R)-5,10-methylene-5,6,7,8-tetrahydrofolate is bound at residue H51. 126-127 (RR) serves as a coordination point for dUMP. C146 serves as the catalytic Nucleophile. DUMP contacts are provided by residues 166–169 (RSAD), N177, and 207–209 (HLY). Residue D169 participates in (6R)-5,10-methylene-5,6,7,8-tetrahydrofolate binding. S263 is a (6R)-5,10-methylene-5,6,7,8-tetrahydrofolate binding site.

The protein belongs to the thymidylate synthase family. Bacterial-type ThyA subfamily. As to quaternary structure, homodimer.

The protein resides in the cytoplasm. It carries out the reaction dUMP + (6R)-5,10-methylene-5,6,7,8-tetrahydrofolate = 7,8-dihydrofolate + dTMP. It participates in pyrimidine metabolism; dTTP biosynthesis. Its function is as follows. Catalyzes the reductive methylation of 2'-deoxyuridine-5'-monophosphate (dUMP) to 2'-deoxythymidine-5'-monophosphate (dTMP) while utilizing 5,10-methylenetetrahydrofolate (mTHF) as the methyl donor and reductant in the reaction, yielding dihydrofolate (DHF) as a by-product. This enzymatic reaction provides an intracellular de novo source of dTMP, an essential precursor for DNA biosynthesis. The chain is Thymidylate synthase from Laribacter hongkongensis (strain HLHK9).